Consider the following 397-residue polypeptide: Tryptophan synthase beta chain (397 aa).

K88 carries the N6-(pyridoxal phosphate)lysine modification.

It belongs to the TrpB family. In terms of assembly, tetramer of two alpha and two beta chains. Pyridoxal 5'-phosphate is required as a cofactor.

The catalysed reaction is (1S,2R)-1-C-(indol-3-yl)glycerol 3-phosphate + L-serine = D-glyceraldehyde 3-phosphate + L-tryptophan + H2O. Its pathway is amino-acid biosynthesis; L-tryptophan biosynthesis; L-tryptophan from chorismate: step 5/5. The beta subunit is responsible for the synthesis of L-tryptophan from indole and L-serine. This chain is Tryptophan synthase beta chain, found in Haemophilus influenzae (strain 86-028NP).